The following is a 225-amino-acid chain: Uridine kinase (225 aa).

12-19 (GGTGAGKT) provides a ligand contact to ATP.

It belongs to the uridine kinase family.

The protein localises to the cytoplasm. The catalysed reaction is uridine + ATP = UMP + ADP + H(+). It catalyses the reaction cytidine + ATP = CMP + ADP + H(+). It functions in the pathway pyrimidine metabolism; CTP biosynthesis via salvage pathway; CTP from cytidine: step 1/3. Its pathway is pyrimidine metabolism; UMP biosynthesis via salvage pathway; UMP from uridine: step 1/1. The chain is Uridine kinase from Halobacterium salinarum (strain ATCC 700922 / JCM 11081 / NRC-1) (Halobacterium halobium).